The sequence spans 367 residues: GDP-perosamine synthase (367 aa).

At K181 the chain carries N6-(pyridoxal phosphate)lysine.

It belongs to the DegT/DnrJ/EryC1 family. As to quaternary structure, homotetramer. The cofactor is pyridoxal 5'-phosphate.

It carries out the reaction GDP-alpha-D-perosamine + 2-oxoglutarate = GDP-4-dehydro-alpha-D-rhamnose + L-glutamate. It participates in bacterial outer membrane biogenesis; LPS O-antigen biosynthesis. Its function is as follows. Catalyzes the synthesis of GDP-perosamine from GDP-4-keto-6-deoxy-D-mannose and L-glutamate. Also shows weak activity with L-glutamine. In Vibrio cholerae, this protein is GDP-perosamine synthase.